Consider the following 360-residue polypeptide: DNA replication and repair protein RecF (360 aa).

Residue 30–37 (GHNGSGKT) coordinates ATP.

This sequence belongs to the RecF family.

It is found in the cytoplasm. Functionally, the RecF protein is involved in DNA metabolism; it is required for DNA replication and normal SOS inducibility. RecF binds preferentially to single-stranded, linear DNA. It also seems to bind ATP. This Actinobacillus pleuropneumoniae serotype 5b (strain L20) protein is DNA replication and repair protein RecF.